Here is a 394-residue protein sequence, read N- to C-terminus: Phosphoglycerate kinase (394 aa).

Residues 21–23 (DLN), arginine 36, 59–62 (HLGR), arginine 113, and arginine 146 each bind substrate. ATP contacts are provided by residues lysine 197, glutamate 319, and 345–348 (GGDT).

It belongs to the phosphoglycerate kinase family. Monomer.

The protein localises to the cytoplasm. It catalyses the reaction (2R)-3-phosphoglycerate + ATP = (2R)-3-phospho-glyceroyl phosphate + ADP. The protein operates within carbohydrate degradation; glycolysis; pyruvate from D-glyceraldehyde 3-phosphate: step 2/5. This chain is Phosphoglycerate kinase, found in Halorhodospira halophila (strain DSM 244 / SL1) (Ectothiorhodospira halophila (strain DSM 244 / SL1)).